A 294-amino-acid chain; its full sequence is 4-hydroxy-tetrahydrodipicolinate synthase (294 aa).

Thr47 provides a ligand contact to pyruvate. Catalysis depends on Tyr135, which acts as the Proton donor/acceptor. Lys163 acts as the Schiff-base intermediate with substrate in catalysis. Pyruvate is bound at residue Thr205.

It belongs to the DapA family. As to quaternary structure, homotetramer; dimer of dimers.

The protein resides in the cytoplasm. The catalysed reaction is L-aspartate 4-semialdehyde + pyruvate = (2S,4S)-4-hydroxy-2,3,4,5-tetrahydrodipicolinate + H2O + H(+). It participates in amino-acid biosynthesis; L-lysine biosynthesis via DAP pathway; (S)-tetrahydrodipicolinate from L-aspartate: step 3/4. In terms of biological role, catalyzes the condensation of (S)-aspartate-beta-semialdehyde [(S)-ASA] and pyruvate to 4-hydroxy-tetrahydrodipicolinate (HTPA). This chain is 4-hydroxy-tetrahydrodipicolinate synthase, found in Rickettsia felis (strain ATCC VR-1525 / URRWXCal2) (Rickettsia azadi).